We begin with the raw amino-acid sequence, 341 residues long: Paired box protein Pax-9 (341 aa).

The segment at residues 4 to 130 (AFGEVNQLGG…SSISRILRNK (127 aa)) is a DNA-binding region (paired). Residues 7–63 (EVNQLGGVFVNGRPLPNAIRLRIVELAQLGIRPCDISRQLRVSHGCVSKILARYNET) are PAI subdomain. The RED subdomain stretch occupies residues 82 to 130 (TVVKHIRTYKQRDPGIFAWEIRDRLLADGVCDKYNVPSVSSISRILRNK). The interaction with KDM5B stretch occupies residues 168–189 (AAAAKVPTPPGVPAIPGSVAMP).

As to quaternary structure, interacts with KDM5B.

The protein resides in the nucleus. Its function is as follows. Transcription factor required for normal development of thymus, parathyroid glands, ultimobranchial bodies, teeth, skeletal elements of skull and larynx as well as distal limbs. The protein is Paired box protein Pax-9 (PAX9) of Homo sapiens (Human).